Consider the following 337-residue polypeptide: Probable RuBisCO transcriptional regulator (337 aa).

The region spanning 6–63 (FTLDQLRILKAIAVEGSFKRAADSLYVSQPAVSLQVQNLERQLDVPLFDRGGRRAQLT) is the HTH lysR-type domain. The H-T-H motif DNA-binding region spans 23-42 (FKRAADSLYVSQPAVSLQVQ).

It belongs to the LysR transcriptional regulatory family.

Its function is as follows. Trans-acting transcriptional regulator of RuBisCO genes (rbcL and rbcS) expression. In Trichormus variabilis (strain ATCC 29413 / PCC 7937) (Anabaena variabilis), this protein is Probable RuBisCO transcriptional regulator (rbcR).